A 223-amino-acid polypeptide reads, in one-letter code: Lipoprotein signal peptidase (223 aa).

Positions 1–20 are disordered; it reads MNSAKVNPSGHAPTPAPTAS. 4 consecutive transmembrane segments (helical) span residues 32-52, 65-85, 91-111, and 116-136; these read LFFG…EAIF, WIIE…VFGL, LVFA…LFFF, and SCWL…NLYD. Residues Asp-156 and Asp-175 contribute to the active site. A helical membrane pass occupies residues 173–193; sequence IADSLLVTGAIMLLVQSFFFP. The disordered stretch occupies residues 196 to 223; it reads PHGEADGNELPGRRAPDEPTEGTKPAAS.

It belongs to the peptidase A8 family.

Its subcellular location is the cell inner membrane. It carries out the reaction Release of signal peptides from bacterial membrane prolipoproteins. Hydrolyzes -Xaa-Yaa-Zaa-|-(S,diacylglyceryl)Cys-, in which Xaa is hydrophobic (preferably Leu), and Yaa (Ala or Ser) and Zaa (Gly or Ala) have small, neutral side chains.. The protein operates within protein modification; lipoprotein biosynthesis (signal peptide cleavage). This protein specifically catalyzes the removal of signal peptides from prolipoproteins. This Rhodopirellula baltica (strain DSM 10527 / NCIMB 13988 / SH1) protein is Lipoprotein signal peptidase.